A 95-amino-acid polypeptide reads, in one-letter code: Protein ECS1 (95 aa).

Residues 1–27 (MASSIVSSMFLFLLLLLVFPHIDNVLG) form the signal peptide.

Expressed in leaves, flowers and stems, but not in roots.

The protein localises to the secreted. It is found in the cell wall. Its function is as follows. Maybe involved in defense responses to X.campestris, but probably not a X.campestris pv. campestris race 750 (e.g. Xcc750) resistance gene; according to genetic data, linked to a locus influencing resistance to Xcc750. The sequence is that of Protein ECS1 from Arabidopsis thaliana (Mouse-ear cress).